Reading from the N-terminus, the 475-residue chain is MSSNPFNPFEAALNWQRKTLENMTDAAETSQVADERLELMESVDVGQTPSNVVYEENKLELLHYDAEAAGIEVPDEEKEDVPILIVYALINRPYILDLQEERSVVRRLLEAGHDVYLIDWNEPSRLDQHLTLDDYVNRYMDNCVDVVRDRSGQDAINILGYCMGGTMSVMYTALHKEKVNTLGLMAAGLCFDHTGGVLEEWGSEEYYSPQDVVDTFGNVPADMLDIGFALMDPVENYVTKYIRFAENMENEGFVENFGRMEQWLGDGIDVAGEAYVQFLEDVYQDNKLYKNELELDGKHVDLDNIDMPVLQLMGEYDHLIPPEASKPFNDVIASDDTRTIEFSTGHIGLSVSSSTHADLWPEVAEWYSERSTGSEEVDIEVESPEAAEDDAVDQSELTDIDVDATDDVDADATEDDATDEPADVDSVSGIGPTYAERLHDAGIHSVADLAEYDAADLADIAETTESRAQDWLDQL.

The region spanning proline 82–glycine 348 is the AB hydrolase-1 domain. Catalysis depends on charge relay system residues cysteine 162, aspartate 317, and histidine 346. The disordered stretch occupies residues glutamate 369–glycine 431. Positions glutamate 375–aspartate 423 are enriched in acidic residues.

The protein belongs to the PHA/PHB synthase family. As to quaternary structure, heterodimer with PhaE.

Its pathway is biopolymer metabolism; poly-(R)-3-hydroxybutanoate biosynthesis. Functionally, involved in the production of polyhydroxyalkonic acids (PHAs), which are water-insoluble biopolymers used as intracellular energy reserve material when cells grow under conditions of nutrient limitation. PHAs are composed primarily of 3-hydroxybutyric acid (3HB) and 3-hydroxyvaleric acid (3HV). Required for the production of poly-beta-hydroxybutyrate (PHB) and poly(beta-hydroxybutyrate-co-beta-hydroxyvalerate) (PHBV). This Haloarcula marismortui (strain ATCC 43049 / DSM 3752 / JCM 8966 / VKM B-1809) (Halobacterium marismortui) protein is Poly(3-hydroxyalkanoate) polymerase subunit PhaC (phaC).